We begin with the raw amino-acid sequence, 141 residues long: Hemoglobin subunit alpha-1/2 (141 aa).

The Globin domain maps to 1-141 (VLSPADKTNV…VSTVLTSKYR (141 aa)). Position 3 is a phosphoserine (Ser-3). Lys-7 is modified (N6-succinyllysine). Thr-8 is modified (phosphothreonine). Lys-11 carries the N6-succinyllysine modification. The residue at position 16 (Lys-16) is an N6-acetyllysine; alternate. The residue at position 16 (Lys-16) is an N6-succinyllysine; alternate. Tyr-24 carries the post-translational modification Phosphotyrosine. Ser-35 carries the phosphoserine modification. At Lys-40 the chain carries N6-succinyllysine. Ser-49 bears the Phosphoserine mark. His-58 is a binding site for O2. Position 87 (His-87) interacts with heme b. The residue at position 102 (Ser-102) is a Phosphoserine. Thr-108 is subject to Phosphothreonine. Ser-124 bears the Phosphoserine mark. 2 positions are modified to phosphothreonine: Thr-134 and Thr-137. Position 138 is a phosphoserine (Ser-138).

It belongs to the globin family. In terms of assembly, heterotetramer of two alpha chains and two beta chains. Red blood cells.

Functionally, involved in oxygen transport from the lung to the various peripheral tissues. The sequence is that of Hemoglobin subunit alpha-1/2 from Mustela putorius (European polecat).